Here is a 475-residue protein sequence, read N- to C-terminus: Cytochrome P450 monooxygenase opdE (475 aa).

A helical transmembrane segment spans residues 10–32 (VQNIPVLLLSCGFLAILFRSLVL). Cys457 contributes to the heme binding site.

The protein belongs to the cytochrome P450 family. It depends on heme as a cofactor.

The protein localises to the membrane. The protein operates within secondary metabolite biosynthesis. Its function is as follows. Cytochrome P450 monooxygenase; part of the gene cluster that mediates the biosynthesis of oxopyrrolidines, polyketide-amino acid hybrid compounds with feature structures of tetramic acid. Does not seem to play a role in oxopyrrolidines A and B biosynthesis. May be involved in further modifications of these oxopyrrolidines. The protein is Cytochrome P450 monooxygenase opdE of Penicillium oxalicum (strain 114-2 / CGMCC 5302) (Penicillium decumbens).